The following is a 340-amino-acid chain: Anthranilate phosphoribosyltransferase (340 aa).

5-phospho-alpha-D-ribose 1-diphosphate contacts are provided by residues Gly82, 85-86 (GD), Thr90, 92-95 (NIST), 110-118 (KHGSRSVSS), and Ser122. Gly82 contributes to the anthranilate binding site. Ser94 serves as a coordination point for Mg(2+). Residue Arg168 participates in anthranilate binding. Mg(2+) contacts are provided by Asp227 and Glu228.

It belongs to the anthranilate phosphoribosyltransferase family. As to quaternary structure, homodimer. Mg(2+) is required as a cofactor.

It catalyses the reaction N-(5-phospho-beta-D-ribosyl)anthranilate + diphosphate = 5-phospho-alpha-D-ribose 1-diphosphate + anthranilate. The protein operates within amino-acid biosynthesis; L-tryptophan biosynthesis; L-tryptophan from chorismate: step 2/5. Catalyzes the transfer of the phosphoribosyl group of 5-phosphorylribose-1-pyrophosphate (PRPP) to anthranilate to yield N-(5'-phosphoribosyl)-anthranilate (PRA). This Hydrogenovibrio crunogenus (strain DSM 25203 / XCL-2) (Thiomicrospira crunogena) protein is Anthranilate phosphoribosyltransferase.